A 155-amino-acid chain; its full sequence is Small ribosomal subunit protein uS7 (155 aa).

This sequence belongs to the universal ribosomal protein uS7 family. As to quaternary structure, part of the 30S ribosomal subunit. Contacts proteins S9 and S11.

Its function is as follows. One of the primary rRNA binding proteins, it binds directly to 16S rRNA where it nucleates assembly of the head domain of the 30S subunit. Is located at the subunit interface close to the decoding center, probably blocks exit of the E-site tRNA. The sequence is that of Small ribosomal subunit protein uS7 from Sulfurimonas denitrificans (strain ATCC 33889 / DSM 1251) (Thiomicrospira denitrificans (strain ATCC 33889 / DSM 1251)).